The primary structure comprises 148 residues: uncharacterized protein (148 aa).

Disordered stretches follow at residues 1-86 (MCPP…VQSP) and 122-148 (RAHR…TSPC). Over residues 38–57 (RPPKMQRRPRPPVAKRRRFP) the composition is skewed to basic residues. Positions 134 to 148 (QSRQRPSPDSQTSPC) are enriched in polar residues.

This sequence belongs to the Epstein-Barr virus BLLF2 family.

This is an uncharacterized protein from Homo sapiens (Human).